The chain runs to 569 residues: Mitogen-activated protein kinase 8 (569 aa).

One can recognise a Protein kinase domain in the interval 13 to 304; the sequence is YKIQEVIGKG…AEEALADPYF (292 aa). Residues 19–27 and K42 each bind ATP; that span reads IGKGSYGVV. D139 functions as the Proton acceptor in the catalytic mechanism. T175 carries the phosphothreonine modification. The TXY motif lies at 175 to 177; the sequence is TDY. Y177 is modified (phosphotyrosine). The segment at 404 to 432 is disordered; sequence TTVHSAPIPPKDHQNITSQVPQRIPGRTG.

It belongs to the protein kinase superfamily. CMGC Ser/Thr protein kinase family. MAP kinase subfamily. Dually phosphorylated on Thr-175 and Tyr-177, which activates the enzyme. As to expression, expressed in leaves and panicles.

It carries out the reaction L-seryl-[protein] + ATP = O-phospho-L-seryl-[protein] + ADP + H(+). It catalyses the reaction L-threonyl-[protein] + ATP = O-phospho-L-threonyl-[protein] + ADP + H(+). With respect to regulation, activated by threonine and tyrosine phosphorylation. In Oryza sativa subsp. japonica (Rice), this protein is Mitogen-activated protein kinase 8 (MPK8).